Consider the following 106-residue polypeptide: UPF0145 protein GSU2791 (106 aa).

It belongs to the UPF0145 family.

The protein is UPF0145 protein GSU2791 of Geobacter sulfurreducens (strain ATCC 51573 / DSM 12127 / PCA).